The primary structure comprises 128 residues: Large ribosomal subunit protein bL17 (128 aa).

This sequence belongs to the bacterial ribosomal protein bL17 family. Part of the 50S ribosomal subunit. Contacts protein L32.

The protein is Large ribosomal subunit protein bL17 of Streptococcus gordonii (strain Challis / ATCC 35105 / BCRC 15272 / CH1 / DL1 / V288).